The following is a 237-amino-acid chain: Phosphoribosylaminoimidazole-succinocarboxamide synthase (237 aa).

Belongs to the SAICAR synthetase family.

It carries out the reaction 5-amino-1-(5-phospho-D-ribosyl)imidazole-4-carboxylate + L-aspartate + ATP = (2S)-2-[5-amino-1-(5-phospho-beta-D-ribosyl)imidazole-4-carboxamido]succinate + ADP + phosphate + 2 H(+). It participates in purine metabolism; IMP biosynthesis via de novo pathway; 5-amino-1-(5-phospho-D-ribosyl)imidazole-4-carboxamide from 5-amino-1-(5-phospho-D-ribosyl)imidazole-4-carboxylate: step 1/2. The sequence is that of Phosphoribosylaminoimidazole-succinocarboxamide synthase from Edwardsiella ictaluri (strain 93-146).